The sequence spans 161 residues: Large ribosomal subunit protein uL11 (161 aa).

This sequence belongs to the universal ribosomal protein uL11 family. As to quaternary structure, part of the ribosomal stalk of the 50S ribosomal subunit. Interacts with L10 and the large rRNA to form the base of the stalk. L10 forms an elongated spine to which L12 dimers bind in a sequential fashion forming a multimeric L10(L12)X complex.

Functionally, forms part of the ribosomal stalk which helps the ribosome interact with GTP-bound translation factors. This chain is Large ribosomal subunit protein uL11, found in Methanosarcina barkeri (strain Fusaro / DSM 804).